A 224-amino-acid chain; its full sequence is Ribonuclease HII (224 aa).

The region spanning 21–223 (RAIAGIDEAG…IRNAALEGEQ (203 aa)) is the RNase H type-2 domain. Asp27, Glu28, and Asp124 together coordinate a divalent metal cation.

It belongs to the RNase HII family. Mn(2+) is required as a cofactor. Requires Mg(2+) as cofactor.

The protein localises to the cytoplasm. The catalysed reaction is Endonucleolytic cleavage to 5'-phosphomonoester.. In terms of biological role, endonuclease that specifically degrades the RNA of RNA-DNA hybrids. This chain is Ribonuclease HII, found in Roseiflexus castenholzii (strain DSM 13941 / HLO8).